The sequence spans 372 residues: uncharacterized protein (372 aa).

Residues 49-72 (FSHKGGGKGGGSGAGSNDGGCSGE) form a disordered region. Residues 55 to 70 (GKGGGSGAGSNDGGCS) show a composition bias toward gly residues.

This is an uncharacterized protein from Halorubrum lacusprofundi (strain ATCC 49239 / DSM 5036 / JCM 8891 / ACAM 34).